The primary structure comprises 470 residues: Myricetin 3-O-rhamnoside 1,2-glucosyltransferase UGT709G2 (470 aa).

Histidine 20 acts as the Proton acceptor in catalysis. Histidine 20 contributes to the an anthocyanidin binding site. Aspartate 117 acts as the Charge relay in catalysis. Alanine 340, glutamine 342, histidine 357, tryptophan 360, asparagine 361, serine 362, and glutamate 365 together coordinate UDP-alpha-D-glucose. Alanine 380 serves as a coordination point for an anthocyanidin. 2 residues coordinate UDP-alpha-D-glucose: aspartate 381 and glutamine 382.

This sequence belongs to the UDP-glycosyltransferase family. As to expression, expressed in young cromes.

It carries out the reaction myricetin 3-O-alpha-L-rhamnoside + UDP-alpha-D-glucose = myricetin 3-O-[beta-D-glucosyl-(1-&gt;2)-alpha-L-rhamnoside] + UDP + H(+). Its pathway is flavonoid metabolism. In terms of biological role, glucosyltransferase involved in montbretin A (MbA) biosynthesis. Catalyzes the glucosylation of myricetin 3-O-alpha-L-rhamnoside (MR) to produce myricetin 3-O-[beta-D-glucosyl-(1-&gt;2)-alpha-L-rhamnoside] (MRG), a precursor of MbA. MbA is a potent inhibitor of human pancreatic alpha-amylase and is being developed as drug candidate to treat type-2 diabetes. In vitro, is able to transfer UDP-xylose with 50-fold less efficiency compared with UDP-glucose. In vitro, can use myricetin 3-O-glucoside and quercetin 3-O-glucoside as substrates, although these two flavonoids may not be physiological substrates in vivo. In Crocosmia x crocosmiiflora (Montbretia), this protein is Myricetin 3-O-rhamnoside 1,2-glucosyltransferase UGT709G2.